The following is a 382-amino-acid chain: Anhydro-N-acetylmuramic acid kinase (382 aa).

Residue 18-25 (GTSLDGVD) coordinates ATP.

This sequence belongs to the anhydro-N-acetylmuramic acid kinase family.

It carries out the reaction 1,6-anhydro-N-acetyl-beta-muramate + ATP + H2O = N-acetyl-D-muramate 6-phosphate + ADP + H(+). It participates in amino-sugar metabolism; 1,6-anhydro-N-acetylmuramate degradation. Its pathway is cell wall biogenesis; peptidoglycan recycling. Catalyzes the specific phosphorylation of 1,6-anhydro-N-acetylmuramic acid (anhMurNAc) with the simultaneous cleavage of the 1,6-anhydro ring, generating MurNAc-6-P. Is required for the utilization of anhMurNAc either imported from the medium or derived from its own cell wall murein, and thus plays a role in cell wall recycling. This is Anhydro-N-acetylmuramic acid kinase from Ralstonia nicotianae (strain ATCC BAA-1114 / GMI1000) (Ralstonia solanacearum).